Consider the following 241-residue polypeptide: Serine protease 58 (241 aa).

A signal peptide spans 1–17 (MKFILLWALLNLTVALA). One can recognise a Peptidase S1 domain in the interval 18-239 (FNPDYTVSST…YIPWIENVIQ (222 aa)). Cysteine 41 and cysteine 57 are oxidised to a cystine. Catalysis depends on charge relay system residues histidine 56 and aspartate 101. 3 disulfides stabilise this stretch: cysteine 133–cysteine 201, cysteine 165–cysteine 180, and cysteine 191–cysteine 215. Asparagine 156 and asparagine 173 each carry an N-linked (GlcNAc...) asparagine glycan. Serine 195 (charge relay system) is an active-site residue.

It belongs to the peptidase S1 family.

It is found in the secreted. It carries out the reaction Preferential cleavage: Arg-|-Xaa, Lys-|-Xaa.. The protein is Serine protease 58 (PRSS58) of Homo sapiens (Human).